We begin with the raw amino-acid sequence, 486 residues long: tRNA sulfurtransferase (486 aa).

The region spanning Q60–R166 is the THUMP domain. Residues L184–I185, K266, G288, and Q297 each bind ATP. C345 and C458 are disulfide-bonded. In terms of domain architecture, Rhodanese spans L406–P484. The active-site Cysteine persulfide intermediate is C458.

This sequence belongs to the ThiI family.

Its subcellular location is the cytoplasm. The catalysed reaction is [ThiI sulfur-carrier protein]-S-sulfanyl-L-cysteine + a uridine in tRNA + 2 reduced [2Fe-2S]-[ferredoxin] + ATP + H(+) = [ThiI sulfur-carrier protein]-L-cysteine + a 4-thiouridine in tRNA + 2 oxidized [2Fe-2S]-[ferredoxin] + AMP + diphosphate. It carries out the reaction [ThiS sulfur-carrier protein]-C-terminal Gly-Gly-AMP + S-sulfanyl-L-cysteinyl-[cysteine desulfurase] + AH2 = [ThiS sulfur-carrier protein]-C-terminal-Gly-aminoethanethioate + L-cysteinyl-[cysteine desulfurase] + A + AMP + 2 H(+). It participates in cofactor biosynthesis; thiamine diphosphate biosynthesis. Functionally, catalyzes the ATP-dependent transfer of a sulfur to tRNA to produce 4-thiouridine in position 8 of tRNAs, which functions as a near-UV photosensor. Also catalyzes the transfer of sulfur to the sulfur carrier protein ThiS, forming ThiS-thiocarboxylate. This is a step in the synthesis of thiazole, in the thiamine biosynthesis pathway. The sulfur is donated as persulfide by IscS. The polypeptide is tRNA sulfurtransferase (Blochmanniella pennsylvanica (strain BPEN)).